Here is a 176-residue protein sequence, read N- to C-terminus: ATP-dependent protease subunit HslV (176 aa).

The active site involves Thr-5. Ser-161, Cys-164, and Thr-167 together coordinate Na(+).

Belongs to the peptidase T1B family. HslV subfamily. As to quaternary structure, a double ring-shaped homohexamer of HslV is capped on each side by a ring-shaped HslU homohexamer. The assembly of the HslU/HslV complex is dependent on binding of ATP.

The protein resides in the cytoplasm. It carries out the reaction ATP-dependent cleavage of peptide bonds with broad specificity.. Allosterically activated by HslU binding. Functionally, protease subunit of a proteasome-like degradation complex believed to be a general protein degrading machinery. The chain is ATP-dependent protease subunit HslV from Desulfitobacterium hafniense (strain DSM 10664 / DCB-2).